A 164-amino-acid polypeptide reads, in one-letter code: Lipoprotein signal peptidase (164 aa).

4 helical membrane passes run 12 to 32 (WLWL…LILQ), 42 to 62 (LFPS…SFLA), 70 to 90 (WFFA…MYRS), and 102 to 122 (ALII…GFVV). Residues Asp-123 and Asp-141 contribute to the active site. The helical transmembrane segment at 137 to 157 (FNLADTAICVGAALIVLEGFL) threads the bilayer.

This sequence belongs to the peptidase A8 family.

It localises to the cell inner membrane. The enzyme catalyses Release of signal peptides from bacterial membrane prolipoproteins. Hydrolyzes -Xaa-Yaa-Zaa-|-(S,diacylglyceryl)Cys-, in which Xaa is hydrophobic (preferably Leu), and Yaa (Ala or Ser) and Zaa (Gly or Ala) have small, neutral side chains.. The protein operates within protein modification; lipoprotein biosynthesis (signal peptide cleavage). This protein specifically catalyzes the removal of signal peptides from prolipoproteins. The chain is Lipoprotein signal peptidase from Shigella flexneri serotype 5b (strain 8401).